The sequence spans 455 residues: MRLLAWLIFLANWGGARAEPGKFWHIADLHLDPDYKVSKDPFQVCPSAGSQPVPDAGPWGDYLCDSPWALINSSIYAMKEIEPEPDFILWTGDDTPHVPDEKLGEAAVLEIVERLTKLIREVFPDTKVYAALGNHDFHPKNQFPAGSNNIYNQIAELWKPWLSNESIALFKKGAFYCEKLPGPSGAGRIVVLNTNLYYTSNALTADMADPGQQFQWLEDVLTDASKAGDMVYIVGHVPPGFFEKTQNKAWFREGFNEKYLKVVRKHHRVIAGQFFGHHHTDSFRMLYDDAGVPISAMFITPGVTPWKTTLPGVVNGANNPAIRVFEYDRATLSLKDMVTYFMNLSQANAQGTPRWELEYQLTEAYGVPDASAHSMHTVLDRIAGDQSTLQRYYVYNSVSYSAGVCDEACSMQHVCAMRQVDIDAYTTCLYASGTTPVPQLPLLLMALLGLCTLVL.

An N-terminal signal peptide occupies residues 1–18; it reads MRLLAWLIFLANWGGARA. Residues D28 and H30 each coordinate Zn(2+). C45 and C64 are joined by a disulfide. N72 carries an N-linked (GlcNAc...) asparagine glycan. Positions 93 and 134 each coordinate Zn(2+). An N-linked (GlcNAc...) asparagine glycan is attached at N164. Zn(2+) is bound by residues H236, H277, and H279. The N-linked (GlcNAc...) asparagine glycan is linked to N343. 2 cysteine pairs are disulfide-bonded: C405/C409 and C415/C428.

It belongs to the acid sphingomyelinase family. As to quaternary structure, interacts with TLR4, TLR7, TLR8 and TLR9. It depends on Zn(2+) as a cofactor. N-glycosylated.

Its subcellular location is the secreted. The protein resides in the cell membrane. In terms of biological role, lipid-modulating phosphodiesterase. Active on the surface of macrophages and dendritic cells and strongly influences macrophage lipid composition and membrane fluidity. Acts as a negative regulator of Toll-like receptor signaling. Has in vitro phosphodiesterase activity, but the physiological substrate is unknown. Lacks activity with phosphocholine-containing lipids, but can cleave CDP-choline, and can release phosphate from ATP and ADP (in vitro). The protein is Acid sphingomyelinase-like phosphodiesterase 3b (SMPDL3B) of Homo sapiens (Human).